The primary structure comprises 363 residues: NAD(P)H-quinone oxidoreductase subunit 1, chloroplastic (363 aa).

A run of 8 helical transmembrane segments spans residues 27–47 (LIPILIILLGATLGVLVIVWL), 93–113 (WLFSVGPALVVVPVFLSYLVV), 124–144 (LGVGILFWIALSSIAPLGLLM), 162–182 (AAQAISYEIPLALCVLSVALL), 200–220 (ILGWNIWRQPIGFIAFLIASL), 250–270 (FGLFYVGSYLNLLVSALFVSV), 303–323 (ATLGIAITLGKAYLFLFLSIL), and 343–363 (FLLPVSLGNLLLTASLQLALL).

Belongs to the complex I subunit 1 family. In terms of assembly, NDH is composed of at least 16 different subunits, 5 of which are encoded in the nucleus.

Its subcellular location is the plastid. The protein resides in the chloroplast thylakoid membrane. It carries out the reaction a plastoquinone + NADH + (n+1) H(+)(in) = a plastoquinol + NAD(+) + n H(+)(out). The enzyme catalyses a plastoquinone + NADPH + (n+1) H(+)(in) = a plastoquinol + NADP(+) + n H(+)(out). NDH shuttles electrons from NAD(P)H:plastoquinone, via FMN and iron-sulfur (Fe-S) centers, to quinones in the photosynthetic chain and possibly in a chloroplast respiratory chain. The immediate electron acceptor for the enzyme in this species is believed to be plastoquinone. Couples the redox reaction to proton translocation, and thus conserves the redox energy in a proton gradient. The sequence is that of NAD(P)H-quinone oxidoreductase subunit 1, chloroplastic from Chaetosphaeridium globosum (Charophycean green alga).